Here is a 98-residue protein sequence, read N- to C-terminus: NADH-ubiquinone oxidoreductase chain 4L (98 aa).

3 helical membrane passes run 2-22 (PSIS…MLIF), 29-49 (SLLC…LTIL), and 61-81 (ILLL…LVTV).

Belongs to the complex I subunit 4L family. In terms of assembly, core subunit of respiratory chain NADH dehydrogenase (Complex I) which is composed of 45 different subunits.

The protein resides in the mitochondrion inner membrane. The enzyme catalyses a ubiquinone + NADH + 5 H(+)(in) = a ubiquinol + NAD(+) + 4 H(+)(out). Its function is as follows. Core subunit of the mitochondrial membrane respiratory chain NADH dehydrogenase (Complex I) which catalyzes electron transfer from NADH through the respiratory chain, using ubiquinone as an electron acceptor. Part of the enzyme membrane arm which is embedded in the lipid bilayer and involved in proton translocation. This is NADH-ubiquinone oxidoreductase chain 4L (MT-ND4L) from Eulemur mongoz (Mongoose lemur).